We begin with the raw amino-acid sequence, 337 residues long: Structural protein VP9 (337 aa).

It is found in the virion. The protein resides in the host cytoplasm. In Colorado tick fever virus (strain USA/Florio N-7180) (CTFV), this protein is Structural protein VP9.